The chain runs to 483 residues: Aspartyl/glutamyl-tRNA(Asn/Gln) amidotransferase subunit B (483 aa).

Belongs to the GatB/GatE family. GatB subfamily. Heterotrimer of A, B and C subunits.

The catalysed reaction is L-glutamyl-tRNA(Gln) + L-glutamine + ATP + H2O = L-glutaminyl-tRNA(Gln) + L-glutamate + ADP + phosphate + H(+). The enzyme catalyses L-aspartyl-tRNA(Asn) + L-glutamine + ATP + H2O = L-asparaginyl-tRNA(Asn) + L-glutamate + ADP + phosphate + 2 H(+). Its function is as follows. Allows the formation of correctly charged Asn-tRNA(Asn) or Gln-tRNA(Gln) through the transamidation of misacylated Asp-tRNA(Asn) or Glu-tRNA(Gln) in organisms which lack either or both of asparaginyl-tRNA or glutaminyl-tRNA synthetases. The reaction takes place in the presence of glutamine and ATP through an activated phospho-Asp-tRNA(Asn) or phospho-Glu-tRNA(Gln). The sequence is that of Aspartyl/glutamyl-tRNA(Asn/Gln) amidotransferase subunit B from Thermomicrobium roseum (strain ATCC 27502 / DSM 5159 / P-2).